The primary structure comprises 443 residues: ATP-dependent protease ATPase subunit HslU (443 aa).

Residues I18, 60-65 (GVGKTE), D256, E321, and R393 each bind ATP.

This sequence belongs to the ClpX chaperone family. HslU subfamily. As to quaternary structure, a double ring-shaped homohexamer of HslV is capped on each side by a ring-shaped HslU homohexamer. The assembly of the HslU/HslV complex is dependent on binding of ATP.

It localises to the cytoplasm. Functionally, ATPase subunit of a proteasome-like degradation complex; this subunit has chaperone activity. The binding of ATP and its subsequent hydrolysis by HslU are essential for unfolding of protein substrates subsequently hydrolyzed by HslV. HslU recognizes the N-terminal part of its protein substrates and unfolds these before they are guided to HslV for hydrolysis. This is ATP-dependent protease ATPase subunit HslU from Salmonella arizonae (strain ATCC BAA-731 / CDC346-86 / RSK2980).